The sequence spans 477 residues: Glycogen synthase (477 aa).

K15 contacts ADP-alpha-D-glucose.

This sequence belongs to the glycosyltransferase 1 family. Bacterial/plant glycogen synthase subfamily.

The enzyme catalyses [(1-&gt;4)-alpha-D-glucosyl](n) + ADP-alpha-D-glucose = [(1-&gt;4)-alpha-D-glucosyl](n+1) + ADP + H(+). It functions in the pathway glycan biosynthesis; glycogen biosynthesis. Synthesizes alpha-1,4-glucan chains using ADP-glucose. This chain is Glycogen synthase, found in Streptococcus pneumoniae (strain JJA).